The chain runs to 755 residues: Serine/threonine-protein kinase GL21140 (755 aa).

Residues 18-52 (QASASGSGTPKKTAASSAAAQNSKQLLDQLSQQQK) are compositionally biased toward low complexity. The tract at residues 18-128 (QASASGSGTP…GSANTNGSAS (111 aa)) is disordered. 2 stretches are compositionally biased toward basic and acidic residues: residues 53-66 (AQEE…RDCD) and 74-84 (EPEKDLDELRD). Residues 87–99 (GSLTGSGSVGKSN) show a composition bias toward polar residues. Residues 100-128 (GSLSGASSTTSAPAGTSTPGSANTNGSAS) are compositionally biased toward low complexity. Doublecortin domains lie at 157–243 (HRIK…VDYN) and 314–397 (RIVT…VDDF). In terms of domain architecture, Protein kinase spans 484 to 742 (YTLSQIIGDG…SEDILDHYWT (259 aa)). Residues 490-498 (IGDGNFAIV) and Lys-513 contribute to the ATP site. The active-site Proton acceptor is Asp-605.

The protein belongs to the protein kinase superfamily. CAMK Ser/Thr protein kinase family. CaMK subfamily.

The catalysed reaction is L-seryl-[protein] + ATP = O-phospho-L-seryl-[protein] + ADP + H(+). The enzyme catalyses L-threonyl-[protein] + ATP = O-phospho-L-threonyl-[protein] + ADP + H(+). The protein is Serine/threonine-protein kinase GL21140 of Drosophila persimilis (Fruit fly).